A 160-amino-acid chain; its full sequence is Bursicon (160 aa).

Positions 1–20 (MSVLNTFLVIVALILCYVND) are cleaved as a signal peptide. Residues 38 to 131 (CQECQMTAVI…PLQCMCRPCG (94 aa)) enclose the CTCK domain. Disulfide bonds link C41/C90, C55/C104, C65/C125, C69/C127, and C87/C130.

As to quaternary structure, heterodimer of burs and pburs.

It localises to the secreted. In terms of biological role, final heterodimeric neurohormone released at the end of the molting cycle, involved in the sclerotization (tanning) of the insect cuticle, melanization and wing spreading. In Bombyx mori (Silk moth), this protein is Bursicon.